The primary structure comprises 503 residues: ATP synthase subunit alpha (503 aa).

Residue 170-177 (GDRATGKT) coordinates ATP.

This sequence belongs to the ATPase alpha/beta chains family. As to quaternary structure, F-type ATPases have 2 components, CF(1) - the catalytic core - and CF(0) - the membrane proton channel. CF(1) has five subunits: alpha(3), beta(3), gamma(1), delta(1), epsilon(1). CF(0) has three main subunits: a(1), b(2) and c(9-12). The alpha and beta chains form an alternating ring which encloses part of the gamma chain. CF(1) is attached to CF(0) by a central stalk formed by the gamma and epsilon chains, while a peripheral stalk is formed by the delta and b chains.

The protein localises to the cell inner membrane. The enzyme catalyses ATP + H2O + 4 H(+)(in) = ADP + phosphate + 5 H(+)(out). Functionally, produces ATP from ADP in the presence of a proton gradient across the membrane. The alpha chain is a regulatory subunit. In Aquifex aeolicus (strain VF5), this protein is ATP synthase subunit alpha.